A 193-amino-acid chain; its full sequence is Ion-translocating oxidoreductase complex subunit A (193 aa).

A run of 6 helical transmembrane segments spans residues 5-25, 39-59, 63-83, 102-122, 134-154, and 171-191; these read LLLL…FLGL, IGMG…SYLM, ILIP…VIAV, LLGI…VALL, IIYG…FAAM, and SIAM…TGLI.

The protein belongs to the NqrDE/RnfAE family. In terms of assembly, the complex is composed of six subunits: RnfA, RnfB, RnfC, RnfD, RnfE and RnfG.

It is found in the cell inner membrane. Its function is as follows. Part of a membrane-bound complex that couples electron transfer with translocation of ions across the membrane. This chain is Ion-translocating oxidoreductase complex subunit A, found in Aeromonas hydrophila subsp. hydrophila (strain ATCC 7966 / DSM 30187 / BCRC 13018 / CCUG 14551 / JCM 1027 / KCTC 2358 / NCIMB 9240 / NCTC 8049).